Consider the following 312-residue polypeptide: Aspartoacylase (312 aa).

His20 and Glu23 together coordinate Zn(2+). Arg62, Asn69, and Arg70 together coordinate N-acetyl-L-aspartate. His115 contributes to the Zn(2+) binding site. N-acetyl-L-aspartate-binding residues include Tyr163 and Arg167. Glu177 acts as the Proton donor/acceptor in catalysis. Tyr287 contributes to the N-acetyl-L-aspartate binding site.

This sequence belongs to the AspA/AstE family. Aspartoacylase subfamily. As to quaternary structure, homodimer. The cofactor is Zn(2+). Detected in kidney proximal tubule cells (at protein level).

It localises to the cytoplasm. It is found in the nucleus. The enzyme catalyses an N-acyl-L-aspartate + H2O = a carboxylate + L-aspartate. It catalyses the reaction N-acetyl-L-aspartate + H2O = L-aspartate + acetate. Catalyzes the deacetylation of N-acetylaspartic acid (NAA) to produce acetate and L-aspartate. NAA occurs in high concentration in brain and its hydrolysis NAA plays a significant part in the maintenance of intact white matter. In other tissues it acts as a scavenger of NAA from body fluids. This chain is Aspartoacylase, found in Rattus norvegicus (Rat).